A 704-amino-acid polypeptide reads, in one-letter code: Polyribonucleotide nucleotidyltransferase (704 aa).

Residues D488 and D494 each contribute to the Mg(2+) site. Positions 555–614 constitute a KH domain; that stretch reads PRITTIKINPEKIRDVIGKGGATIRALTEETGTTIELDDDGTVKIASSNGEATKEAIRRI. The S1 motif domain maps to 624–692; that stretch reads GTVYNGKVVR…RQGRVRLSMK (69 aa).

Belongs to the polyribonucleotide nucleotidyltransferase family. As to quaternary structure, component of the RNA degradosome, which is a multiprotein complex involved in RNA processing and mRNA degradation. Mg(2+) is required as a cofactor.

It is found in the cytoplasm. It carries out the reaction RNA(n+1) + phosphate = RNA(n) + a ribonucleoside 5'-diphosphate. Its function is as follows. Involved in mRNA degradation. Catalyzes the phosphorolysis of single-stranded polyribonucleotides processively in the 3'- to 5'-direction. In Shewanella halifaxensis (strain HAW-EB4), this protein is Polyribonucleotide nucleotidyltransferase.